The sequence spans 664 residues: UvrABC system protein B (664 aa).

Positions 25–170 constitute a Helicase ATP-binding domain; that stretch reads NSILLGNKYQ…FVGQRISIKE (146 aa). 38–45 contributes to the ATP binding site; sequence GVTGSGKT. Positions 91–114 match the Beta-hairpin motif; sequence YYDYYQPESYVPSKDLFIEKEATI. Residues 429 to 595 enclose the Helicase C-terminal domain; that stretch reads QMEDLYIEIQ…TIVKKIQNIL (167 aa). The UVR domain maps to 622–657; the sequence is KKLIDKLKFELEEAVNDERFEDAIVLRDKIKELGSK.

Belongs to the UvrB family. As to quaternary structure, forms a heterotetramer with UvrA during the search for lesions. Interacts with UvrC in an incision complex.

It localises to the cytoplasm. Functionally, the UvrABC repair system catalyzes the recognition and processing of DNA lesions. A damage recognition complex composed of 2 UvrA and 2 UvrB subunits scans DNA for abnormalities. Upon binding of the UvrA(2)B(2) complex to a putative damaged site, the DNA wraps around one UvrB monomer. DNA wrap is dependent on ATP binding by UvrB and probably causes local melting of the DNA helix, facilitating insertion of UvrB beta-hairpin between the DNA strands. Then UvrB probes one DNA strand for the presence of a lesion. If a lesion is found the UvrA subunits dissociate and the UvrB-DNA preincision complex is formed. This complex is subsequently bound by UvrC and the second UvrB is released. If no lesion is found, the DNA wraps around the other UvrB subunit that will check the other stand for damage. In Borreliella afzelii (strain PKo) (Borrelia afzelii), this protein is UvrABC system protein B.